Consider the following 1245-residue polypeptide: Structural polyprotein (1245 aa).

Positions 1-106 (MNRGFFNMLG…KTKPGKRQRM (106 aa)) are disordered. The segment at 37 to 70 (GLASQIQQLTTAVSALVIGQATRPQNPRPRPPPR) is host transcription inhibition. Over residues 38-49 (LASQIQQLTTAV) the composition is skewed to polar residues. Residues 63–100 (PRPRPPPRQKKQAPKQPPKPKKPKPQEKKKKQPAKTKP) carry the Nuclear localization signal motif. Basic residues predominate over residues 67–106 (PPPRQKKQAPKQPPKPKKPKPQEKKKKQPAKTKPGKRQRM). The binding to the viral RNA stretch occupies residues 86 to 115 (KPQEKKKKQPAKTKPGKRQRMALKLEADRL). The segment at 100 to 114 (PGKRQRMALKLEADR) is ribosome-binding. A Peptidase S3 domain is found at 114 to 264 (RLFDVKNEDG…KTTPEGTEEW (151 aa)). Catalysis depends on His141, which acts as the Charge relay system. The short motif at 146-156 (IDHPVLSKLKF) is the Nuclear export signal element. Residues 157 to 162 (TKSSAY) form an interaction with spike glycoprotein E2 region. Asp163 serves as the catalytic Charge relay system. The segment at 185–195 (PEGFYNWHHGA) is dimerization of the capsid protein. The Charge relay system role is filled by Ser215. The segment at 221–225 (DNSGR) is dimerization of the capsid protein. The segment at 249–253 (SKGKT) is interaction with spike glycoprotein E2. A functions as an uncleaved signal peptide for the precursor of protein E3/E2 region spans residues 265–279 (SAAPLVTAMCLLGNV). N-linked (GlcNAc...) asparagine; by host glycosylation is present at Asn278. 4 cysteine pairs are disulfide-bonded: Cys283/Cys289, Cys480/Cys594, Cys529/Cys554, and Cys531/Cys548. Topologically, residues 329–690 (SVTDDFTLTS…HEIVQHYYHR (362 aa)) are extracellular. Asn524 carries an N-linked (GlcNAc...) asparagine; by host glycan. An N-linked (GlcNAc...) asparagine; by host glycan is attached at Asn646. A helical membrane pass occupies residues 691 to 718 (HPVYTILAVASAAVAMMIGVTVAALCAC). The interaction with the capsid protein stretch occupies residues 719–723 (KARRE). At 719 to 751 (KARRECLTPYALAPNAVIPTSLALLCCVRSANA) the chain is on the cytoplasmic side. S-palmitoyl cysteine; by host attachment occurs at residues Cys724, Cys744, and Cys745. Cys724 and Cys745 are oxidised to a cystine. The Extracellular portion of the chain corresponds to 752–763 (ETFTETMSYFWS). A helical transmembrane segment spans residues 764 to 784 (NSQPFFWVQLCIPLAAVIVLM). Residue Arg785 is a topological domain, cytoplasmic. A helical membrane pass occupies residues 786 to 806 (CCSCCLPFLVVAGAYLAKVDA). Residues 807 to 1214 (YEHATTVPNV…QAAISKTSWS (408 aa)) lie on the Extracellular side of the membrane. 4 disulfide bridges follow: Cys855–Cys920, Cys868–Cys900, Cys869–Cys902, and Cys874–Cys884. The segment at 890–907 (VYPFMWGGAQCFCDSENS) is E1 fusion peptide loop. N-linked (GlcNAc...) asparagine; by host glycans are attached at residues Asn945 and Asn1051. 4 cysteine pairs are disulfide-bonded: Cys1065–Cys1077, Cys1107–Cys1182, Cys1112–Cys1186, and Cys1134–Cys1176. The helical transmembrane segment at 1215 to 1239 (WLFALFGGASSLLIIGLTIFACSMM) threads the bilayer. The Cytoplasmic portion of the chain corresponds to 1240–1245 (LTSTRR).

In terms of assembly, homodimer. Homomultimer. Interacts with host karyopherin KPNA4; this interaction allows the nuclear import of the viral capsid protein. Interacts with spike glycoprotein E2. Interacts with host IRAK1; the interaction leads to inhibition of IRAK1-dependent signaling. As to quaternary structure, the precursor of protein E3/E2 and E1 form a heterodimer shortly after synthesis. The precursor of protein E3/E2 and E1 form a heterodimer shortly after synthesis. Processing of the precursor of protein E3/E2 into E2 and E3 results in a heterodimer of the spike glycoproteins E2 and E1. Spike at virion surface are constituted of a trimer of E2-E1 heterodimers. After target cell attachment and endocytosis, E1 change conformation to form homotrimers. E2-E1 heterodimers interact with host VLDLR or LRP8/APOER2 to mediate viral entry. Interacts with 6K protein. In terms of assembly, processing of the precursor of protein E3/E2 into E2 and E3 results in a heterodimer of the spike glycoproteins E2 and E1. Spike at virion surface are constituted of a trimer of E2-E1 heterodimers. E2-E1 heterodimers interact with host VLDLR or LRP8/APOER2 to mediate viral entry. Interacts with 6K protein. Interacts with the capsid protein. As to quaternary structure, oligomer. Interacts with spike glycoprotein E1. Interacts with spike glycoprotein E2. Structural polyprotein: Specific enzymatic cleavages in vivo yield mature proteins. Capsid protein is auto-cleaved during polyprotein translation, unmasking a signal peptide at the N-terminus of the precursor of E3/E2. The remaining polyprotein is then targeted to the host endoplasmic reticulum, where host signal peptidase cleaves it into pE2, 6K and E1 proteins. pE2 is further processed to mature E3 and E2 by host furin in trans-Golgi vesicle. In terms of processing, palmitoylated via thioester bonds. These palmitoylations may induce disruption of the C-terminus transmembrane. This would result in the reorientation of E2 C-terminus from lumenal to cytoplasmic side. Post-translationally, N-glycosylated. Palmitoylated via thioester bonds.

The protein resides in the virion. The protein localises to the host cytoplasm. Its subcellular location is the host cell membrane. It localises to the host nucleus. It is found in the virion membrane. The protein resides in the host Golgi apparatus. The protein localises to the host trans-Golgi network. Its subcellular location is the host endoplasmic reticulum. It carries out the reaction Autocatalytic release of the core protein from the N-terminus of the togavirus structural polyprotein by hydrolysis of a -Trp-|-Ser- bond.. Functionally, forms an icosahedral capsid with a T=4 symmetry composed of 240 copies of the capsid protein surrounded by a lipid membrane through which penetrate 80 spikes composed of trimers of E1-E2 heterodimers. The capsid protein binds to the viral RNA genome at a site adjacent to a ribosome binding site for viral genome translation following genome release. Possesses a protease activity that results in its autocatalytic cleavage from the nascent structural protein. Following its self-cleavage, the capsid protein transiently associates with ribosomes, and within several minutes the protein binds to viral RNA and rapidly assembles into icosahedric core particles. The resulting nucleocapsid eventually associates with the cytoplasmic domain of the spike glycoprotein E2 at the cell membrane, leading to budding and formation of mature virions. In case of infection, new virions attach to target cells and after clathrin-mediated endocytosis their membrane fuses with the host endosomal membrane. This leads to the release of the nucleocapsid into the cytoplasm, followed by an uncoating event necessary for the genomic RNA to become accessible. The uncoating might be triggered by the interaction of capsid proteins with ribosomes. Binding of ribosomes would release the genomic RNA since the same region is genomic RNA-binding and ribosome-binding. Specifically inhibits interleukin-1 receptor-associated kinase 1/IRAK1-dependent signaling during viral entry, representing a means by which the alphaviruses may evade innate immune detection and activation prior to viral gene expression. Its function is as follows. Provides the signal sequence for the translocation of the precursor of protein E3/E2 to the host endoplasmic reticulum. Furin-cleaved E3 remains associated with spike glycoprotein E1 and mediates pH protection of the latter during the transport via the secretory pathway. After virion release from the host cell, the assembly protein E3 is gradually released in the extracellular space. Plays a role in viral attachment to target host cell, by binding to the cell receptors VLDLR or LRP8/APOER2. Synthesized as a pE2 precursor which is processed by furin at the cell membrane just before virion budding, giving rise to E2-E1 heterodimer. The pE2-E1 heterodimer is stable, whereas E2-E1 is unstable and dissociate at low pH. pE2 is processed at the last step, presumably to avoid E1 fusion activation before its final export to cell surface. E2 C-terminus contains a transitory transmembrane that would be disrupted by palmitoylation, resulting in reorientation of the C-terminal tail from lumenal to cytoplasmic side. This step is critical since E2 C-terminus is involved in budding by interacting with capsid proteins. This release of E2 C-terminus in cytoplasm occurs lately in protein export, and precludes premature assembly of particles at the endoplasmic reticulum membrane. In terms of biological role, acts as a viroporin that participates in virus glycoprotein processing and transport to the plasma membrane, cell permeabilization and budding of viral particles. Disrupts the calcium homeostasis of the cell, probably at the endoplasmic reticulum level resulting in the increased levels of cytoplasmic calcium. Because of its lipophilic properties, the 6K protein is postulated to influence the selection of lipids that interact with the transmembrane domains of the glycoproteins, which, in turn, affects the deformability of the bilayer required for the extreme curvature that occurs as budding proceeds. Present in low amount in virions, about 3% compared to viral glycoproteins. Functionally, class II viral fusion protein. Fusion activity is inactive as long as E1 is bound to E2 in mature virion. After virus attachment to target cell via host VLDLR or LRP8/APOER2 and endocytosis, acidification of the endosome induces dissociation of E1/E2 heterodimer and concomitant trimerization of the E1 subunits. This E1 trimer is fusion active, and promotes release of viral nucleocapsid in cytoplasm after endosome and viral membrane fusion. Efficient fusion requires the presence of cholesterol and sphingolipid in the target membrane. This Acrocephalus scirpaceus (Eurasian reed-warbler) protein is Structural polyprotein.